We begin with the raw amino-acid sequence, 441 residues long: Lysine histidine transporter-like 2 (441 aa).

Residues 1 to 32 are Cytoplasmic-facing; the sequence is MEKSQSSPTKDASTKQKNVDDWLPITSSRNAK. The helical transmembrane segment at 33–53 threads the bilayer; that stretch reads WWYSAFHNVTAMVGAGVLSLP. At 54–58 the chain is on the extracellular side; that stretch reads YAMSN. Residues 59–79 traverse the membrane as a helical segment; the sequence is LGWGPGVTIMIMSWLITFYTL. Residues 80-110 lie on the Cytoplasmic side of the membrane; that stretch reads WQMVQMHEMVPGKRFDRYHELGQHAFGEKLG. Residues 111–131 traverse the membrane as a helical segment; it reads LWIVVPQQLIVEVGVDIVYMV. The Extracellular portion of the chain corresponds to 132–155; the sequence is TGGKSLKKIHDLLCTDCKNIRTTY. The next 2 membrane-spanning stretches (helical) occupy residues 156-176 and 177-197; these read WIMI…FNSI and SIVS…AWAT. At 198-222 the chain is on the extracellular side; the sequence is SVKKGVHPNVDYSSRASTTSGNVFN. The chain crosses the membrane as a helical span at residues 223-243; it reads FLNALGDVAFAYAGHNVVLEI. Residues 244-264 lie on the Cytoplasmic side of the membrane; sequence QATIPSTPEKPSKIAMWKGVV. A helical membrane pass occupies residues 265–285; the sequence is VAYIVVAICYFPVAFVCYYIF. Over 286 to 300 the chain is Extracellular; sequence GNSVDDNILMTLEKP. The helical transmembrane segment at 301–321 threads the bilayer; that stretch reads IWLIAIANAFVVVHVIGSYQI. The Cytoplasmic portion of the chain corresponds to 322 to 347; the sequence is YAMPVFDMLETFLVKKMMFAPSFKLR. The helical transmembrane segment at 348–370 threads the bilayer; that stretch reads FITRTLYVAFTMFVAICIPFFGG. The Extracellular segment spans residues 371 to 373; sequence LLG. Residues 374–396 traverse the membrane as a helical segment; the sequence is FFGGFAFAPTTYYLPCIMWLCIK. Topologically, residues 397–406 are cytoplasmic; that stretch reads KPKKYGLSWC. The chain crosses the membrane as a helical span at residues 407–427; it reads INWFCIVVGVILTILAPIGGL. Residues 428-441 lie on the Extracellular side of the membrane; it reads RTIIISAKNYEFFS.

The protein belongs to the amino acid/polyamine transporter 2 family. Amino acid/auxin permease (AAAP) (TC 2.A.18.2) subfamily.

Its subcellular location is the cell membrane. Functionally, amino acid transporter. The polypeptide is Lysine histidine transporter-like 2 (Arabidopsis thaliana (Mouse-ear cress)).